The primary structure comprises 427 residues: Histidinol dehydrogenase (427 aa).

Tyrosine 125, glutamine 186, and asparagine 209 together coordinate NAD(+). The substrate site is built by serine 234, glutamine 256, and histidine 259. Zn(2+)-binding residues include glutamine 256 and histidine 259. Residues glutamate 325 and histidine 326 each act as proton acceptor in the active site. Residues histidine 326, aspartate 359, glutamate 413, and histidine 419 each contribute to the substrate site. Zn(2+) is bound at residue aspartate 359. Histidine 419 serves as a coordination point for Zn(2+).

This sequence belongs to the histidinol dehydrogenase family. Requires Zn(2+) as cofactor.

The enzyme catalyses L-histidinol + 2 NAD(+) + H2O = L-histidine + 2 NADH + 3 H(+). It participates in amino-acid biosynthesis; L-histidine biosynthesis; L-histidine from 5-phospho-alpha-D-ribose 1-diphosphate: step 9/9. Catalyzes the sequential NAD-dependent oxidations of L-histidinol to L-histidinaldehyde and then to L-histidine. This Leptospira interrogans serogroup Icterohaemorrhagiae serovar Lai (strain 56601) protein is Histidinol dehydrogenase.